A 272-amino-acid polypeptide reads, in one-letter code: Acyl-[acyl-carrier-protein]--UDP-N-acetylglucosamine O-acyltransferase (272 aa).

It belongs to the transferase hexapeptide repeat family. LpxA subfamily. As to quaternary structure, homotrimer.

It is found in the cytoplasm. It carries out the reaction a (3R)-hydroxyacyl-[ACP] + UDP-N-acetyl-alpha-D-glucosamine = a UDP-3-O-[(3R)-3-hydroxyacyl]-N-acetyl-alpha-D-glucosamine + holo-[ACP]. Its pathway is glycolipid biosynthesis; lipid IV(A) biosynthesis; lipid IV(A) from (3R)-3-hydroxytetradecanoyl-[acyl-carrier-protein] and UDP-N-acetyl-alpha-D-glucosamine: step 1/6. In terms of biological role, involved in the biosynthesis of lipid A, a phosphorylated glycolipid that anchors the lipopolysaccharide to the outer membrane of the cell. The sequence is that of Acyl-[acyl-carrier-protein]--UDP-N-acetylglucosamine O-acyltransferase from Rhizobium leguminosarum bv. trifolii (strain WSM2304).